Consider the following 219-residue polypeptide: Uracil-DNA glycosylase (219 aa).

The active-site Proton acceptor is aspartate 64.

The protein belongs to the uracil-DNA glycosylase (UDG) superfamily. UNG family.

It localises to the cytoplasm. It catalyses the reaction Hydrolyzes single-stranded DNA or mismatched double-stranded DNA and polynucleotides, releasing free uracil.. Excises uracil residues from the DNA which can arise as a result of misincorporation of dUMP residues by DNA polymerase or due to deamination of cytosine. The sequence is that of Uracil-DNA glycosylase from Leuconostoc citreum (strain KM20).